Reading from the N-terminus, the 237-residue chain is 1-(5-phosphoribosyl)-5-[(5-phosphoribosylamino)methylideneamino] imidazole-4-carboxamide isomerase (237 aa).

Residue Asp8 is the Proton acceptor of the active site. Asp129 (proton donor) is an active-site residue.

The protein belongs to the HisA/HisF family.

It localises to the cytoplasm. The enzyme catalyses 1-(5-phospho-beta-D-ribosyl)-5-[(5-phospho-beta-D-ribosylamino)methylideneamino]imidazole-4-carboxamide = 5-[(5-phospho-1-deoxy-D-ribulos-1-ylimino)methylamino]-1-(5-phospho-beta-D-ribosyl)imidazole-4-carboxamide. It participates in amino-acid biosynthesis; L-histidine biosynthesis; L-histidine from 5-phospho-alpha-D-ribose 1-diphosphate: step 4/9. This Dehalococcoides mccartyi (strain ATCC BAA-2266 / KCTC 15142 / 195) (Dehalococcoides ethenogenes (strain 195)) protein is 1-(5-phosphoribosyl)-5-[(5-phosphoribosylamino)methylideneamino] imidazole-4-carboxamide isomerase.